Consider the following 316-residue polypeptide: Apolipoprotein E (316 aa).

The first 18 residues, 1–18 (MKVLWVALVVALLAGCQA), serve as a signal peptide directing secretion. 8 tandem repeats follow at residues 79 to 100 (VLMEETMKEVKAYREELEGQLA), 101 to 122 (PMAQETQARVSKELQAAQARLG), 123 to 144 (SDMEDLRNRLAQYRSEVQAMLG), 145 to 166 (QSTEELRARMASHLRKLRKRLL), 167 to 188 (RDADDLKKRLAVYQAGASEGAE), 189 to 210 (RSVSAIRERLRPLVEQGQSRAA), 211 to 232 (TLSTQAAQPLLDRAEAWRQKLH), and 233 to 254 (GRLEEVGVRAQDRLDKMRQQLE). The tract at residues 79 to 254 (VLMEETMKEV…RLDKMRQQLE (176 aa)) is 8 X 22 AA approximate tandem repeats. M142 is subject to Methionine sulfoxide. The residue at position 146 (S146) is a Phosphoserine. The segment at 157-167 (HLRKLRKRLLR) is LDL and other lipoprotein receptors binding. 161–164 (LRKR) contributes to the heparin binding site. Residues 209 to 289 (AATLSTQAAQ…SWFEPLVGDM (81 aa)) form a lipid-binding and lipoprotein association region. An O-linked (GalNAc...) threonine glycan is attached at T211. Position 228–235 (228–235 (RQKLHGRL)) interacts with heparin. Residues 265 to 316 (SQIRLQAEAFQARLRSWFEPLVGDMQRQWAGLVEKVQLALHLSPTSPPSENH) are homooligomerization. The interval 277 to 289 (RLRSWFEPLVGDM) is specificity for association with VLDL.

The protein belongs to the apolipoprotein A1/A4/E family. As to quaternary structure, homotetramer. May interact with ABCA1; functionally associated with ABCA1 in the biogenesis of HDLs. May interact with APP/A4 amyloid-beta peptide; the interaction is extremely stable in vitro but its physiological significance is unclear. May interact with MAPT. May interact with MAP2. In the cerebrospinal fluid, interacts with secreted SORL1. Interacts with PMEL; this allows the loading of PMEL luminal fragment on ILVs to induce fibril nucleation. In terms of processing, APOE exists as multiple glycosylated and sialylated glycoforms within cells and in plasma. The extent of glycosylation and sialylation are tissue and context specific. Post-translationally, glycated in plasma VLDL. Phosphorylated by FAM20C in the extracellular medium.

It is found in the secreted. It localises to the extracellular space. Its subcellular location is the extracellular matrix. The protein resides in the extracellular vesicle. The protein localises to the endosome. It is found in the multivesicular body. Functionally, APOE is an apolipoprotein, a protein associating with lipid particles, that mainly functions in lipoprotein-mediated lipid transport between organs via the plasma and interstitial fluids. APOE is a core component of plasma lipoproteins and is involved in their production, conversion and clearance. Apolipoproteins are amphipathic molecules that interact both with lipids of the lipoprotein particle core and the aqueous environment of the plasma. As such, APOE associates with chylomicrons, chylomicron remnants, very low density lipoproteins (VLDL) and intermediate density lipoproteins (IDL) but shows a preferential binding to high-density lipoproteins (HDL). It also binds a wide range of cellular receptors including the LDL receptor/LDLR and the very low-density lipoprotein receptor/VLDLR that mediate the cellular uptake of the APOE-containing lipoprotein particles. Finally, APOE also has a heparin-binding activity and binds heparan-sulfate proteoglycans on the surface of cells, a property that supports the capture and the receptor-mediated uptake of APOE-containing lipoproteins by cells. In Capra hircus aegagrus (Wild goat), this protein is Apolipoprotein E (APOE).